A 305-amino-acid chain; its full sequence is Recombination-associated protein RdgC (305 aa).

Belongs to the RdgC family.

The protein localises to the cytoplasm. It is found in the nucleoid. Its function is as follows. May be involved in recombination. The chain is Recombination-associated protein RdgC from Sodalis glossinidius (strain morsitans).